The chain runs to 427 residues: Glutamate-1-semialdehyde 2,1-aminomutase (427 aa).

Position 267 is an N6-(pyridoxal phosphate)lysine (K267).

The protein belongs to the class-III pyridoxal-phosphate-dependent aminotransferase family. HemL subfamily. Homodimer. Requires pyridoxal 5'-phosphate as cofactor.

It is found in the cytoplasm. It catalyses the reaction (S)-4-amino-5-oxopentanoate = 5-aminolevulinate. It functions in the pathway porphyrin-containing compound metabolism; protoporphyrin-IX biosynthesis; 5-aminolevulinate from L-glutamyl-tRNA(Glu): step 2/2. This is Glutamate-1-semialdehyde 2,1-aminomutase from Sulfurihydrogenibium azorense (strain DSM 15241 / OCM 825 / Az-Fu1).